Reading from the N-terminus, the 1196-residue chain is MAGHDVKYGKHRTRRSFSRIKEVIGLPNLIEVQTLSYKNFLDEGLANVFKEMFPIDNFAGTMELEFVGYEMKTPKYTVEEARAHDANYSAPIYVTFRLVNKETGELKTQEVFFGDFPLMTEMGTFINNGSERLIVSQLVRSPGSYFHLKTDKNGLESFGHTTIPNRGAWFELDTDAKGIGYVRIDRTRKLTFTTMLRALGFGSDDEILELLGETQLLTDTIAKDVHKNPADTRVEEALKDIYDRLRPGEPKTADSSRGLLVARFFDPKRYDFAPVGRYKFNKKLALKNRLLGLTLAEPIVDPETGEILVNTDTLVTRDVLDLIEPLLDNGLGNFVVEPSDDAVIPEPITLQSIKVYSPKDSERVVTLLSNGNPDSECRVLTPADVISNISYWLGLAEGIGKVDDIDHLGNRRIRSVGELLQNQVRIGLSRMERVIRERMSSSENENITPQGLINIRPVTASIKEFFGSSQLSQFMDQHNPLSELSHKRRFSALGPGGISRDRASYEVRDVHYTHYGRMCPIETPEGPNIGLINNLSSYAKVNEYGFIMSPYRRVDRVNGIVTDEVEYLTADEEDNYTVAQANSPLTDDSRFANETVMARHTGNNIEVEASTADYMDVSPKQVIAVAAACIPFLENDDSNRALMGANMQRQAVPLIDPHAPWIGTGMEHQTARDSGAALLAKHAGVVEYVDGNEIRVRRTSGELDIYNITKYRRSNSGTSYNQRPLARLGEKVEKNDIIADGPSMENGEMALGQNPLVAYMTWEGYNFEDAVIMSERLIKDDVYTSIAIEEYESETRDTKLGPEEITREIPNVGDEALKNLDESGIIRIGAEVKDGDLLVGKVTPKGETDPTPEERLLRAIFGEKAREVRDTSLRVPHGGGGIVHDVRVFTRENGDELPSGVNKLVRVFIAQKRKIHVGDKMAGRHGNKGVVSNIVPVEDMPYLPDGTPIDIMLNPLGVPSRMNIGQVMELHLGMAARTLGIHIATPVFDGASDEDIWDTVKEAGMAADAKTVLYDGRTGEPFDNRISVGVMYMIKLHHMVDDKLHARSVGPYSLVTQQPLGGKAQFGGQRFGEMEVWALEAYGAANVLQEILTYKSDDVIGRTRAYEAIVKGERIPKPGLPESFRVLVKELQSLGLDMKVLDADRNVLDLRELDEDEVMTRPDNTEITPEMLEAQEAIVAQAEAEEEALINADIEK.

This sequence belongs to the RNA polymerase beta chain family. As to quaternary structure, the RNAP catalytic core consists of 2 alpha, 1 beta, 1 beta' and 1 omega subunit. When a sigma factor is associated with the core the holoenzyme is formed, which can initiate transcription.

It catalyses the reaction RNA(n) + a ribonucleoside 5'-triphosphate = RNA(n+1) + diphosphate. DNA-dependent RNA polymerase catalyzes the transcription of DNA into RNA using the four ribonucleoside triphosphates as substrates. This is DNA-directed RNA polymerase subunit beta from Lactococcus lactis subsp. cremoris (strain MG1363).